Consider the following 570-residue polypeptide: Proline--tRNA ligase (570 aa).

This sequence belongs to the class-II aminoacyl-tRNA synthetase family. ProS type 1 subfamily. Homodimer.

It is found in the cytoplasm. The enzyme catalyses tRNA(Pro) + L-proline + ATP = L-prolyl-tRNA(Pro) + AMP + diphosphate. Functionally, catalyzes the attachment of proline to tRNA(Pro) in a two-step reaction: proline is first activated by ATP to form Pro-AMP and then transferred to the acceptor end of tRNA(Pro). As ProRS can inadvertently accommodate and process non-cognate amino acids such as alanine and cysteine, to avoid such errors it has two additional distinct editing activities against alanine. One activity is designated as 'pretransfer' editing and involves the tRNA(Pro)-independent hydrolysis of activated Ala-AMP. The other activity is designated 'posttransfer' editing and involves deacylation of mischarged Ala-tRNA(Pro). The misacylated Cys-tRNA(Pro) is not edited by ProRS. This Thermoanaerobacter sp. (strain X514) protein is Proline--tRNA ligase.